Here is a 124-residue protein sequence, read N- to C-terminus: Glucagon-1 (124 aa).

Residues 1 to 25 (MKRIHSLAGILLVLGLIQSSCRVLM) form the signal peptide. The disordered stretch occupies residues 28 to 54 (ADPSSSLEADSTLKDEPRELSNMKRHS). Positions 38-54 (STLKDEPRELSNMKRHS) are enriched in basic and acidic residues. Residues 84–88 (SGVAE) constitute a propeptide that is removed on maturation.

It belongs to the glucagon family.

It localises to the secreted. In terms of biological role, glucagon plays a key role in glucose metabolism and homeostasis. Regulates blood glucose by increasing gluconeogenesis and decreasing glycolysis. This is Glucagon-1 (gcg1) from Lophius americanus (American angler).